We begin with the raw amino-acid sequence, 69 residues long: Conotoxin reg3.6 (69 aa).

The first 20 residues, 1 to 20 (MMSKLGVLLTICLLLFPLSA), serve as a signal peptide directing secretion. Positions 21-52 (LPLDGDQPADQPAERVQDISPDQNPLFHLVKR) are excised as a propeptide. Intrachain disulfides connect Cys54-Cys68, Cys55-Cys66, and Cys60-Cys69.

The protein belongs to the conotoxin M superfamily. In terms of tissue distribution, expressed by the venom duct.

It is found in the secreted. The chain is Conotoxin reg3.6 from Conus regius (Crown cone).